The primary structure comprises 181 residues: Peptide deformylase 1 (181 aa).

The Fe cation site is built by cysteine 106 and histidine 148. Glutamate 149 is an active-site residue. Residue histidine 152 participates in Fe cation binding.

It belongs to the polypeptide deformylase family. It depends on Fe(2+) as a cofactor.

The catalysed reaction is N-terminal N-formyl-L-methionyl-[peptide] + H2O = N-terminal L-methionyl-[peptide] + formate. In terms of biological role, removes the formyl group from the N-terminal Met of newly synthesized proteins. Requires at least a dipeptide for an efficient rate of reaction. N-terminal L-methionine is a prerequisite for activity but the enzyme has broad specificity at other positions. The sequence is that of Peptide deformylase 1 from Burkholderia multivorans (strain ATCC 17616 / 249).